A 499-amino-acid chain; its full sequence is Putative DBH-like monooxygenase protein 2 (499 aa).

Positions 1-16 are cleaved as a signal peptide; it reads MAHDLLFRLFPLLALG. Residues 40–156 enclose the DOMON domain; it reads NVIFLRWDFD…NTVRVLAAYG (117 aa). The active site involves Tyr-209. Disulfide bonds link Cys-211-Cys-261 and Cys-248-Cys-271. N-linked (GlcNAc...) asparagine glycosylation occurs at Asn-236. 2 residues coordinate Cu cation: His-241 and His-242. Asn-250 carries an N-linked (GlcNAc...) asparagine glycan. Positions 308, 389, and 391 each coordinate Cu cation. 2 cysteine pairs are disulfide-bonded: Cys-365–Cys-480 and Cys-443–Cys-465. The active site involves His-389. Residue Asn-404 is glycosylated (N-linked (GlcNAc...) asparagine). Position 464 (Met-464) interacts with Cu cation. The N-linked (GlcNAc...) asparagine glycan is linked to Asn-476.

Belongs to the copper type II ascorbate-dependent monooxygenase family. Cu(2+) is required as a cofactor.

The chain is Putative DBH-like monooxygenase protein 2 (MOXD2P) from Homo sapiens (Human).